Here is a 1020-residue protein sequence, read N- to C-terminus: Retinoblastoma-related protein (1020 aa).

Polar residues-rich tracts occupy residues 382–391 (SPTKTITSPL) and 398–409 (ASHTNGILGSTN). The tract at residues 382–409 (SPTKTITSPLSPHRSPASHTNGILGSTN) is disordered. The interval 415-616 (TPVSTAMTTA…EKGSSMYNSL (202 aa)) is domain A. The tract at residues 415 to 869 (TPVSTAMTTA…NEIFIPAAKP (455 aa)) is pocket. A spacer region spans residues 617–737 (TVARPSLSAE…PGGGGETCAE (121 aa)). The segment at 738–869 (TGINIFFSKI…NEIFIPAAKP (132 aa)) is domain B.

It belongs to the retinoblastoma protein (RB) family.

It is found in the nucleus. Functionally, regulator of biological processes that recruits a histone deacetylase to control gene transcription. May play a role in the entry into mitosis, negatively regulating the cell proliferation. Formation of stable complexes with geminiviridae replication-associated proteins may create a cellular environment which favors viral DNA replication. The chain is Retinoblastoma-related protein (RBR) from Ricinus communis (Castor bean).